A 623-amino-acid chain; its full sequence is Serine/threonine-protein kinase ArnS (623 aa).

Transmembrane regions (helical) follow at residues 13-33 (MILISVFSYVLIALIVLGIVL) and 49-69 (VYLIGLTVYLNPGFSLTQSLI). Residues 317–623 (YRVIEVIGLG…SYDIVKILEG (307 aa)) enclose the Protein kinase domain. Residues 323-331 (IGLGGNGYV) and Lys-344 each bind ATP. The active-site Proton acceptor is the Asp-460.

Belongs to the protein kinase superfamily. Ser/Thr protein kinase family. Post-translationally, autophosphorylated.

It is found in the cell membrane. The enzyme catalyses L-seryl-[protein] + ATP = O-phospho-L-seryl-[protein] + ADP + H(+). The catalysed reaction is L-threonyl-[protein] + ATP = O-phospho-L-threonyl-[protein] + ADP + H(+). Its activity is regulated as follows. Autophosphorylation is stimulated by Mn(2+). In terms of biological role, plays an essential role in the controlled expression of archaellum components during starvation-induced motility. May inhibit arnR transcription and promote ArnR translation. This chain is Serine/threonine-protein kinase ArnS, found in Sulfolobus acidocaldarius (strain ATCC 33909 / DSM 639 / JCM 8929 / NBRC 15157 / NCIMB 11770).